The sequence spans 474 residues: Dipeptidase A (474 aa).

Residue Cys-6 is part of the active site.

This sequence belongs to the peptidase C69 family. In terms of assembly, homooctamer.

The catalysed reaction is an L-aminoacyl-L-amino acid + H2O = 2 an L-alpha-amino acid. Inhibited by Zn(2+), Cu(2+), Ca(2+) and Cd(2+). In terms of biological role, hydrolyzes a wide range of dipeptides but unable to hydrolyze dipeptides containing proline. Highest activity against Met-Ala. This is Dipeptidase A (pepDA) from Lactobacillus helveticus (Lactobacillus suntoryeus).